Here is a 163-residue protein sequence, read N- to C-terminus: uncharacterized protein (163 aa).

Residues 1-54 are disordered; sequence MGKSARLRRSQTSSPENVLLGKDSSDDPYRSDSETESNSSSGTESNMSSDSTTS. Over residues 23 to 33 the composition is skewed to basic and acidic residues; sequence DSSDDPYRSDS. Residues 36 to 52 show a composition bias toward low complexity; that stretch reads ESNSSSGTESNMSSDST. Residues 69–143 are a coiled coil; the sequence is LRTELAEMEM…VEELESSTRE (75 aa).

This is an uncharacterized protein from Arabidopsis thaliana (Mouse-ear cress).